The sequence spans 556 residues: Formate--tetrahydrofolate ligase 1 (556 aa).

Residue 65–72 coordinates ATP; sequence TPAGEGKS.

The protein belongs to the formate--tetrahydrofolate ligase family.

It catalyses the reaction (6S)-5,6,7,8-tetrahydrofolate + formate + ATP = (6R)-10-formyltetrahydrofolate + ADP + phosphate. Its pathway is one-carbon metabolism; tetrahydrofolate interconversion. In Streptococcus pyogenes serotype M4 (strain MGAS10750), this protein is Formate--tetrahydrofolate ligase 1.